We begin with the raw amino-acid sequence, 278 residues long: Energy-coupling factor transporter ATP-binding protein EcfA1 (278 aa).

In terms of domain architecture, ABC transporter spans 5-240; that stretch reads IEVRNLKYKY…EDLEELGLDQ (236 aa). ATP is bound at residue 40–47; the sequence is GHNGSGKS.

Belongs to the ABC transporter superfamily. Energy-coupling factor EcfA family. In terms of assembly, forms a stable energy-coupling factor (ECF) transporter complex composed of 2 membrane-embedded substrate-binding proteins (S component), 2 ATP-binding proteins (A component) and 2 transmembrane proteins (T component).

The protein resides in the cell membrane. In terms of biological role, ATP-binding (A) component of a common energy-coupling factor (ECF) ABC-transporter complex. Unlike classic ABC transporters this ECF transporter provides the energy necessary to transport a number of different substrates. The protein is Energy-coupling factor transporter ATP-binding protein EcfA1 of Streptococcus sanguinis (strain SK36).